A 1335-amino-acid polypeptide reads, in one-letter code: MLSPTFVLWEVGYPLYIYGSIFIVIVIIWQVKRSHHELSSEPKRSCCRCHQKVRQRARDAASTARRRSREEAEKPQKLLSIIKSQGWLPLERSVRRILCADPCCQICNSVALEIQQLLVGENNQISLTLSGPLQGSSCLEMLSTSSMSLDQSLEFHSWHTRELSLSSVTPTLSQLTDQKSLTQSAAQSTYADGIQDYWADHLQLGQEFQVPDVLRGPNTIASSRIEKPRAPLNQEEMTQSNPSLVQGNQGQHHLNSQVSLLSLNPETLNRMHPMALHMVLPAHLPFLSPEVLRLLEVHVKKWMHFQRWGLPRRVEESLRQLMPNPPLYYQPGNDQPVSFNLKNTPQVSLHRFETISLQTWCSCVAGQPIQTFWVSEWSTMNPEQRHHCQQTPNPMALALPSPALKALSGPHPQSGGQDNDSGSDLQQKYSQLFCGLPSLHSESLVATFMGSQGLPKIENVPKPPLKDPFLFNELSFPQLLPKTSPQSAPPSSPLSPNWMSPSDHQRAQINVPFLTLAEYEALEWHLLQRQLQLQWGWPAALQRSQHTQCLMQHEPCGKAQSPETTTASQTGKSISVLTRELLFFPEHARKLLEFHIQKQLIRHRWGLPQKIQQSIQLLLTSTDQQTVSSSSTALANVSIPQPVALEANGACDVLSPIAAPVSIPRPHLLTQVKAILQSHIDSKCGQIHQGKIPACVHRSWDCRISGVLAVAPFPCIPESQFLELQTASDPDLHHKVMPWMPTALDQQQQALPGTVTEHPKLLRVLSVEAIEKLETTLRHKHLAFLSGLPALYYVALPRALAPAVTSQSVITEMEPSPVEIPAEPLIQMVSFEEQCISLGPCPQGNNESCTDVAKEFQPAVPVKGTMETLPLESQTHPTSPHSLQTHILTKLNFHLRKKVLEIQWGIPIRARKSREQTVAAPENISTQKSLESLNHQGETLLQELPIPPDTLPAPNPEGVHLKEQLANDLKAVQQNQKQSNSKAVPQGSAHSVSKISQPSGDMTEAHMPCVQVEANVNKPSLEEPCGPEPQSPSKSKDPAHVPMLAGNREDPEETKAARDHREGDAGFGRSSTREERRPAEDQRPAGMLPNKTPRGSWRWSRSFHLADPCQHSPQHHPQLKLPQLPPRVPGEKESEKDLQDSQTKLTVILEPATIPENAQTVLPQASQGQPFLSQPTQAKPLQGQTLQGQVLHGLVMPVHAQKKPSLTESSFRNKIKCFLQHINPKTKGKGHEDSMFSAAAKVAKTRKENVAKSLAPAKSPVGRSKTEKPTGCSKAQSRPAQKLVGPAFLDGPQSLDDKLRLHSRQPGSASALGYPRHCPRHCPREACANKPGHPT.

A helical membrane pass occupies residues 8-28; that stretch reads LWEVGYPLYIYGSIFIVIVII. Disordered stretches follow at residues 403-424, 480-502, 972-1002, 1019-1141, and 1248-1335; these read ALKA…SGSD, LPKT…MSPS, VQQN…SGDM, PSLE…LQDS, and ENVA…GHPT. A compositionally biased stretch (polar residues) spans 414 to 424; it reads SGGQDNDSGSD. The span at 972–1000 shows a compositional bias: polar residues; sequence VQQNQKQSNSKAVPQGSAHSVSKISQPSG. 3 stretches are compositionally biased toward basic and acidic residues: residues 1047–1064, 1071–1083, and 1129–1139; these read NRED…REGD, STRE…EDQR, and PGEKESEKDLQ.

The protein belongs to the SPATA31 family.

The protein localises to the membrane. The protein is Protein SPATA31F1 of Homo sapiens (Human).